The sequence spans 365 residues: Phospho-N-acetylmuramoyl-pentapeptide-transferase (365 aa).

Helical transmembrane passes span 22-42 (YISV…LALG), 74-94 (TMGG…WGNL), 95-115 (TSIY…IGFF), 134-154 (KFAL…YLLS), 168-188 (SLYI…IING), 201-221 (GLAI…AYIE), 240-260 (LAEV…FLWF), 267-287 (VFMG…IAVM), 292-312 (LIFF…MLQV), and 342-362 (KVVI…FAAI).

Belongs to the glycosyltransferase 4 family. MraY subfamily. Mg(2+) serves as cofactor.

The protein localises to the cell inner membrane. The enzyme catalyses UDP-N-acetyl-alpha-D-muramoyl-L-alanyl-gamma-D-glutamyl-meso-2,6-diaminopimeloyl-D-alanyl-D-alanine + di-trans,octa-cis-undecaprenyl phosphate = di-trans,octa-cis-undecaprenyl diphospho-N-acetyl-alpha-D-muramoyl-L-alanyl-D-glutamyl-meso-2,6-diaminopimeloyl-D-alanyl-D-alanine + UMP. The protein operates within cell wall biogenesis; peptidoglycan biosynthesis. Catalyzes the initial step of the lipid cycle reactions in the biosynthesis of the cell wall peptidoglycan: transfers peptidoglycan precursor phospho-MurNAc-pentapeptide from UDP-MurNAc-pentapeptide onto the lipid carrier undecaprenyl phosphate, yielding undecaprenyl-pyrophosphoryl-MurNAc-pentapeptide, known as lipid I. The polypeptide is Phospho-N-acetylmuramoyl-pentapeptide-transferase (Francisella tularensis subsp. holarctica (strain OSU18)).